The primary structure comprises 452 residues: Serine carboxypeptidase-like 26 (452 aa).

Residues 1–20 (MARLLLLFFFFLILLHYASC) form the signal peptide. Asn52 and Asn138 each carry an N-linked (GlcNAc...) asparagine glycan. Intrachain disulfides connect Cys87-Cys338, Cys244-Cys256, and Cys280-Cys306. Residue Ser180 is part of the active site. The N-linked (GlcNAc...) asparagine glycan is linked to Asn327. Residues Asp375 and His427 contribute to the active site.

The protein belongs to the peptidase S10 family. As to expression, ubiquitous.

It is found in the secreted. Probable carboxypeptidase. This is Serine carboxypeptidase-like 26 (SCPL26) from Arabidopsis thaliana (Mouse-ear cress).